Reading from the N-terminus, the 454-residue chain is Histidine--tRNA ligase (454 aa).

Belongs to the class-II aminoacyl-tRNA synthetase family. In terms of assembly, homodimer.

The protein localises to the cytoplasm. It catalyses the reaction tRNA(His) + L-histidine + ATP = L-histidyl-tRNA(His) + AMP + diphosphate + H(+). The chain is Histidine--tRNA ligase from Porphyromonas gingivalis (strain ATCC BAA-308 / W83).